A 131-amino-acid polypeptide reads, in one-letter code: Large ribosomal subunit protein bL21 (131 aa).

The protein belongs to the bacterial ribosomal protein bL21 family. Part of the 50S ribosomal subunit. Contacts protein L20.

Its function is as follows. This protein binds to 23S rRNA in the presence of protein L20. This is Large ribosomal subunit protein bL21 from Cereibacter sphaeroides (strain ATCC 17023 / DSM 158 / JCM 6121 / CCUG 31486 / LMG 2827 / NBRC 12203 / NCIMB 8253 / ATH 2.4.1.) (Rhodobacter sphaeroides).